Reading from the N-terminus, the 86-residue chain is Large ribosomal subunit protein bL28 (86 aa).

Belongs to the bacterial ribosomal protein bL28 family.

This Bacteroides thetaiotaomicron (strain ATCC 29148 / DSM 2079 / JCM 5827 / CCUG 10774 / NCTC 10582 / VPI-5482 / E50) protein is Large ribosomal subunit protein bL28.